Here is a 164-residue protein sequence, read N- to C-terminus: ATP synthase subunit b 2 (164 aa).

A helical transmembrane segment spans residues 4–24 (TFWAFVGLVLFLALLAYFKVP).

This sequence belongs to the ATPase B chain family. As to quaternary structure, F-type ATPases have 2 components, F(1) - the catalytic core - and F(0) - the membrane proton channel. F(1) has five subunits: alpha(3), beta(3), gamma(1), delta(1), epsilon(1). F(0) has three main subunits: a(1), b(2) and c(10-14). The alpha and beta chains form an alternating ring which encloses part of the gamma chain. F(1) is attached to F(0) by a central stalk formed by the gamma and epsilon chains, while a peripheral stalk is formed by the delta and b chains.

Its subcellular location is the cell inner membrane. Functionally, f(1)F(0) ATP synthase produces ATP from ADP in the presence of a proton or sodium gradient. F-type ATPases consist of two structural domains, F(1) containing the extramembraneous catalytic core and F(0) containing the membrane proton channel, linked together by a central stalk and a peripheral stalk. During catalysis, ATP synthesis in the catalytic domain of F(1) is coupled via a rotary mechanism of the central stalk subunits to proton translocation. Its function is as follows. Component of the F(0) channel, it forms part of the peripheral stalk, linking F(1) to F(0). The chain is ATP synthase subunit b 2 from Bartonella quintana (strain Toulouse) (Rochalimaea quintana).